A 606-amino-acid polypeptide reads, in one-letter code: MGKVIGIDLGTTFSCVAVMEGGQPVVIPNSEGTRTTPSVVAFTKEGERLVGHPARRQAIINPERTIMSIKRHMGTDYKVKIDDKEYTPQEISAMILQKLKADAEAYLGEKVTQAVITVPAYFNDSQRQATKDAGRIAGLEVLRIINEPTAAALAYGLDKEGNQKVMVYDLGGGTFDVSILEIGDGVFEVLATSGNNHLGGDDFDQRIIDWLADNFQKEHGIDLRKDRMALQRLKEAAERAKIELSSAMVTNINLPFITADASGPKHIDVNLTRAKFEELISDLVESTVGPVKQALSDAGLKPEDIDKVLLVGGSTRIPLVQETVKKIMGKEPHKGINPDEAVAIGAAIQAAVLAGEIKDILLLDVTPLSLGIETLGGVFTKIIERNTTIPVRKSQIFTTAADNQTSVEIHVLQGERPLAKDNKSLGRFILSGIPPAPRGVPQIEVTFDIDANGIVHVSAKDLATGKSQQITITGSTNLSEEEIQRMINEAKQYEEQDRKKREEIEIRNRADSLIYQAEKTMKDLGDKMTQAEKDEINKEIENVRKALEGTDVEAIKAASEKLSEAFYKVSTRLYQQAAGSANPGGSQGTSQGNVYEADYKVEDDNK.

At Thr174 the chain carries Phosphothreonine; by autocatalysis. The segment at 576–606 is disordered; that stretch reads QAAGSANPGGSQGTSQGNVYEADYKVEDDNK. Positions 597–606 are enriched in basic and acidic residues; it reads ADYKVEDDNK.

Belongs to the heat shock protein 70 family.

Functionally, acts as a chaperone. This chain is Chaperone protein DnaK, found in Caldanaerobacter subterraneus subsp. tengcongensis (strain DSM 15242 / JCM 11007 / NBRC 100824 / MB4) (Thermoanaerobacter tengcongensis).